Consider the following 440-residue polypeptide: Trigger factor (440 aa).

A PPIase FKBP-type domain is found at 163–248; the sequence is GMVLTVDFSF…LKEIKKKELP (86 aa).

Belongs to the FKBP-type PPIase family. Tig subfamily.

It is found in the cytoplasm. It carries out the reaction [protein]-peptidylproline (omega=180) = [protein]-peptidylproline (omega=0). Functionally, involved in protein export. Acts as a chaperone by maintaining the newly synthesized protein in an open conformation. Functions as a peptidyl-prolyl cis-trans isomerase. The chain is Trigger factor from Trichlorobacter lovleyi (strain ATCC BAA-1151 / DSM 17278 / SZ) (Geobacter lovleyi).